The following is a 363-amino-acid chain: Histidinol-phosphate aminotransferase (363 aa).

Lys218 bears the N6-(pyridoxal phosphate)lysine mark.

This sequence belongs to the class-II pyridoxal-phosphate-dependent aminotransferase family. Histidinol-phosphate aminotransferase subfamily. As to quaternary structure, homodimer. It depends on pyridoxal 5'-phosphate as a cofactor.

It catalyses the reaction L-histidinol phosphate + 2-oxoglutarate = 3-(imidazol-4-yl)-2-oxopropyl phosphate + L-glutamate. It participates in amino-acid biosynthesis; L-histidine biosynthesis; L-histidine from 5-phospho-alpha-D-ribose 1-diphosphate: step 7/9. This Xanthomonas oryzae pv. oryzae (strain MAFF 311018) protein is Histidinol-phosphate aminotransferase.